Reading from the N-terminus, the 288-residue chain is Nucleotide-binding protein Veis_1053 (288 aa).

Glycine 10 to serine 17 contacts ATP. GTP is bound at residue aspartate 59–serine 62.

It belongs to the RapZ-like family.

Displays ATPase and GTPase activities. The sequence is that of Nucleotide-binding protein Veis_1053 from Verminephrobacter eiseniae (strain EF01-2).